Here is a 414-residue protein sequence, read N- to C-terminus: Tyrosine--tRNA ligase (414 aa).

Tyr38 contributes to the L-tyrosine binding site. The 'HIGH' region signature appears at 43–52; it reads CTARSLHIGS. 2 residues coordinate L-tyrosine: Tyr172 and Gln176. The 'KMSKS' region signature appears at 232 to 236; the sequence is KMGKT. Lys235 provides a ligand contact to ATP. Residues 345 to 412 enclose the S4 RNA-binding domain; it reads ISVAKLLQLA…GKKRRIKVVV (68 aa).

Belongs to the class-I aminoacyl-tRNA synthetase family. TyrS type 1 subfamily. As to quaternary structure, homodimer.

The protein localises to the cytoplasm. It catalyses the reaction tRNA(Tyr) + L-tyrosine + ATP = L-tyrosyl-tRNA(Tyr) + AMP + diphosphate + H(+). Catalyzes the attachment of tyrosine to tRNA(Tyr) in a two-step reaction: tyrosine is first activated by ATP to form Tyr-AMP and then transferred to the acceptor end of tRNA(Tyr). This chain is Tyrosine--tRNA ligase, found in Anaplasma marginale (strain St. Maries).